A 426-amino-acid chain; its full sequence is Actin-like protein 6B (426 aa).

Residues Thr-39 to Met-82 form an essential for mediating its function in dendritic development; may contribute to neuronal-specific targeting region.

Belongs to the actin family. In terms of assembly, component of the multiprotein chromatin-remodeling complexes SWI/SNF: SWI/SNF-A (BAF), SWI/SNF-B (PBAF) and related complexes. The canonical complex contains a catalytic subunit (either SMARCA4/BRG1/BAF190A or SMARCA2/BRM/BAF190B) and at least SMARCE1, ACTL6A/BAF53, SMARCC1/BAF155, SMARCC2/BAF170 and SMARCB1/SNF5/BAF47. Other subunits specific to each of the complexes may also be present permitting several possible combinations developmentally and tissue specific. Component of the BAF complex, which includes at least actin (ACTB), ARID1A/BAF250A, ARID1B/BAF250B, SMARCA2/BRM, SMARCA4/BRG1/BAF190A, ACTL6A/BAF53, ACTL6B/BAF53B, SMARCE1/BAF57, SMARCC1/BAF155, SMARCC2/BAF170, SMARCB1/SNF5/INI1 and one or more SMARCD1/BAF60A, SMARCD2/BAF60B, or SMARCD3/BAF60C. Component of neuron-specific chromatin remodeling complex (nBAF complex) composed of at least, ARID1A/BAF250A or ARID1B/BAF250B, SMARCD1/BAF60A or SMARCD2/BAF60B or SMARCD3/BAF60C, SMARCA2/BRM/BAF190B, SMARCA4/BRG1/BAF190A, SMARCB1/BAF47, SMARCC1/BAF155, SMARCE1/BAF57, SMARCC2/BAF170, DPF1/BAF45B, DPF3/BAF45C, ACTL6B/BAF53B and actin (ACTB). Note that the nBAF complex is polymorphic in regard to the ATPase, SMARCA2 and SMARCA4 occupying mutually exclusive positions. May be a component of the SWI/SNF-B (PBAF) chromatin remodeling complex, at least composed of SMARCA4/BRG1, SMARCB1/BAF47/SNF5, ACTL6A/BAF53A or ACTL6B/BAF53B, SMARCE1/BAF57, SMARCD1/BAF60A, SMARCD2/BAF60B, perhaps SMARCD3/BAF60C, SMARCC1/BAF155, SMARCC2/BAF170, PBRM1/BAF180, ARID2/BAF200 and actin.

Its subcellular location is the nucleus. Involved in transcriptional activation and repression of select genes by chromatin remodeling (alteration of DNA-nucleosome topology). Component of SWI/SNF chromatin remodeling complexes that carry out key enzymatic activities, changing chromatin structure by altering DNA-histone contacts within a nucleosome in an ATP-dependent manner. Belongs to the neuron-specific chromatin remodeling complex (nBAF complex), as such plays a role in remodeling mononucleosomes in an ATP-dependent fashion, and is required for postmitotic neural development and dendritic outgrowth. During neural development a switch from a stem/progenitor to a postmitotic chromatin remodeling mechanism occurs as neurons exit the cell cycle and become committed to their adult state. The transition from proliferating neural stem/progenitor cells to postmitotic neurons requires a switch in subunit composition of the npBAF and nBAF complexes. As neural progenitors exit mitosis and differentiate into neurons, npBAF complexes which contain ACTL6A/BAF53A and PHF10/BAF45A, are exchanged for homologous alternative ACTL6B/BAF53B and DPF1/BAF45B or DPF3/BAF45C subunits in neuron-specific complexes (nBAF). The npBAF complex is essential for the self-renewal/proliferative capacity of the multipotent neural stem cells. The nBAF complex along with CREST plays a role regulating the activity of genes essential for dendrite growth. ACTL6B/BAF53B is not essential for assembly of the nBAF complex but is required for targeting the complex and CREST to the promoter of genes essential for dendritic growth. Essential for neuronal maturation and dendrite development. This chain is Actin-like protein 6B, found in Homo sapiens (Human).